The following is a 701-amino-acid chain: Elongation factor G (701 aa).

The tr-type G domain occupies 8 to 290 (SLYRNIGISA…AVVELLPAPT (283 aa)). GTP contacts are provided by residues 17-24 (AHIDAGKT), 88-92 (DTPGH), and 142-145 (NKMD).

This sequence belongs to the TRAFAC class translation factor GTPase superfamily. Classic translation factor GTPase family. EF-G/EF-2 subfamily.

Its subcellular location is the cytoplasm. Catalyzes the GTP-dependent ribosomal translocation step during translation elongation. During this step, the ribosome changes from the pre-translocational (PRE) to the post-translocational (POST) state as the newly formed A-site-bound peptidyl-tRNA and P-site-bound deacylated tRNA move to the P and E sites, respectively. Catalyzes the coordinated movement of the two tRNA molecules, the mRNA and conformational changes in the ribosome. The chain is Elongation factor G from Neisseria meningitidis serogroup B (strain ATCC BAA-335 / MC58).